Here is a 368-residue protein sequence, read N- to C-terminus: Dihydroorotate dehydrogenase (quinone) (368 aa).

Residues 67–71 (AGFDK) and threonine 91 contribute to the FMN site. Lysine 71 contributes to the substrate binding site. 116-120 (NRMGF) lines the substrate pocket. FMN is bound by residues asparagine 146 and asparagine 179. Asparagine 179 serves as a coordination point for substrate. Serine 182 (nucleophile) is an active-site residue. Position 184 (asparagine 184) interacts with substrate. 2 residues coordinate FMN: lysine 222 and threonine 250. Position 251–252 (251–252 (NT)) interacts with substrate. Residues glycine 276, glycine 305, and 326 to 327 (YS) contribute to the FMN site.

The protein belongs to the dihydroorotate dehydrogenase family. Type 2 subfamily. In terms of assembly, monomer. FMN is required as a cofactor.

It is found in the cell membrane. The catalysed reaction is (S)-dihydroorotate + a quinone = orotate + a quinol. The protein operates within pyrimidine metabolism; UMP biosynthesis via de novo pathway; orotate from (S)-dihydroorotate (quinone route): step 1/1. Its function is as follows. Catalyzes the conversion of dihydroorotate to orotate with quinone as electron acceptor. This chain is Dihydroorotate dehydrogenase (quinone), found in Streptomyces avermitilis (strain ATCC 31267 / DSM 46492 / JCM 5070 / NBRC 14893 / NCIMB 12804 / NRRL 8165 / MA-4680).